The sequence spans 77 residues: U11-lycotoxin-Ls1b (77 aa).

The N-terminal stretch at 1-20 (MKLIIFTGLALFAIVSLIEA) is a signal peptide. Positions 21 to 26 (EEESGR) are excised as a propeptide.

It belongs to the neurotoxin 19 (CSTX) family. 10 (U11-Lctx) subfamily. Contains 4 disulfide bonds. In terms of tissue distribution, expressed by the venom gland.

It localises to the secreted. The chain is U11-lycotoxin-Ls1b from Lycosa singoriensis (Wolf spider).